Reading from the N-terminus, the 466-residue chain is Cysteine--tRNA ligase (466 aa).

Cys-29 contacts Zn(2+). The 'HIGH' region motif lies at 31-41; sequence PTVYNYIHIGN. Zn(2+) is bound by residues Cys-209, His-234, and Glu-238. The short motif at 266 to 270 is the 'KMSKS' region element; that stretch reads KMSKS. Residue Lys-269 coordinates ATP.

Belongs to the class-I aminoacyl-tRNA synthetase family. Monomer. It depends on Zn(2+) as a cofactor.

The protein localises to the cytoplasm. The catalysed reaction is tRNA(Cys) + L-cysteine + ATP = L-cysteinyl-tRNA(Cys) + AMP + diphosphate. The protein is Cysteine--tRNA ligase of Lysinibacillus sphaericus (strain C3-41).